We begin with the raw amino-acid sequence, 412 residues long: WW domain-containing oxidoreductase (412 aa).

Positions 1-24 are disordered; it reads MAALKYAGMEDTDSEDELPPGWEE. Residues 16–49 enclose the WW 1 domain; it reads DELPPGWEERSTKDGWVYYANHEEMKTQWEHPKT. The Nuclear localization signal signature appears at 50–55; it reads GKKKRC. A WW 2 domain is found at 57–90; the sequence is GALPYGWEQETDDKGQIFYVDHINKRKTYFDPRQ. 128 to 134 contributes to the NADP(+) binding site; it reads GANSGIG. A substrate-binding site is contributed by S257. Y290 (proton acceptor) is an active-site residue.

Belongs to the short-chain dehydrogenases/reductases (SDR) family.

The protein localises to the cytoplasm. It localises to the mitochondrion. Its subcellular location is the golgi apparatus. It is found in the lysosome. In terms of biological role, putative oxidoreductase. Acts as a tumor suppressor and plays a role in apoptosis. May function synergistically with p53/TP53 to control genotoxic stress-induced cell death. Plays a role in TGFB1 signaling and TGFB1-mediated cell death. May also play a role in tumor necrosis factor (TNF)-mediated cell death. Required for normal bone development. Inhibits Wnt signaling. This chain is WW domain-containing oxidoreductase (wwox), found in Danio rerio (Zebrafish).